The chain runs to 95 residues: MDKRHTIMLIAVAVIAIAPLVIYSGLGEDQGYFGGADDSASKAISETGYKPWFQPIWEPPSGEIESLLFALQAAIGALIIGYVFGYYRGRGESPE.

A run of 2 helical transmembrane segments spans residues 7–27 and 67–87; these read IMLIAVAVIAIAPLVIYSGLG and LLFALQAAIGALIIGYVFGYY.

It belongs to the CbiN family. As to quaternary structure, forms an energy-coupling factor (ECF) transporter complex composed of an ATP-binding protein (A component, CbiO), a transmembrane protein (T component, CbiQ) and 2 possible substrate-capture proteins (S components, CbiM and CbiN) of unknown stoichimetry.

It localises to the cell membrane. The protein operates within cofactor biosynthesis; adenosylcobalamin biosynthesis. Part of the energy-coupling factor (ECF) transporter complex CbiMNOQ involved in cobalt import. The sequence is that of Cobalt transport protein CbiN from Methanothermobacter marburgensis (strain ATCC BAA-927 / DSM 2133 / JCM 14651 / NBRC 100331 / OCM 82 / Marburg) (Methanobacterium thermoautotrophicum).